Consider the following 256-residue polypeptide: 5-keto-4-deoxy-D-glucarate aldolase (256 aa).

The active-site Proton acceptor is His-50. Gln-151 serves as a coordination point for substrate. Glu-153 serves as a coordination point for Mg(2+). Residues Ser-178 and Asp-179 each coordinate substrate. Asp-179 lines the Mg(2+) pocket.

Belongs to the HpcH/HpaI aldolase family. KDGluc aldolase subfamily. Homohexamer; trimer of dimers. The cofactor is Mg(2+).

The enzyme catalyses 5-dehydro-4-deoxy-D-glucarate = 2-hydroxy-3-oxopropanoate + pyruvate. It carries out the reaction 2-dehydro-3-deoxy-D-glucarate = 2-hydroxy-3-oxopropanoate + pyruvate. It functions in the pathway carbohydrate acid metabolism; galactarate degradation; D-glycerate from galactarate: step 2/3. Catalyzes the reversible retro-aldol cleavage of both 5-keto-4-deoxy-D-glucarate and 2-keto-3-deoxy-D-glucarate to pyruvate and tartronic semialdehyde. In Salmonella arizonae (strain ATCC BAA-731 / CDC346-86 / RSK2980), this protein is 5-keto-4-deoxy-D-glucarate aldolase.